A 221-amino-acid polypeptide reads, in one-letter code: PKHD-type hydroxylase P9303_20491 (221 aa).

A Fe2OG dioxygenase domain is found at 80 to 174; that stretch reads HIHGVMFSRS…RLVCVGWIQS (95 aa). The Fe cation site is built by His-98, Asp-100, and His-155. Residue Arg-165 coordinates 2-oxoglutarate.

Fe(2+) serves as cofactor. Requires L-ascorbate as cofactor.

This Prochlorococcus marinus (strain MIT 9303) protein is PKHD-type hydroxylase P9303_20491.